Consider the following 519-residue polypeptide: Cilia- and flagella-associated protein 53 (519 aa).

2 coiled-coil regions span residues 80–107 (NRHL…LLES) and 210–339 (LAKE…QEEQ). The tract at residues 498-519 (TTAVHPFRRRDRRCSSSGGQMS) is disordered.

This sequence belongs to the CFAP53 family.

Its subcellular location is the cytoplasm. It is found in the cytoskeleton. The protein localises to the cilium axoneme. The protein resides in the cilium basal body. Its function is as follows. Microtubule inner protein (MIP) part of the dynein-decorated doublet microtubules (DMTs) in cilia axoneme, which is required for motile cilia beating. Regulates motility patterns of both 9+0 and 9+2 motile cilia through differential localization and recruitment of axonemal dynein components. Required for cilium motility within the spinal canal and Kuppfer's vesicle and is involved in the establishment of left-right symmetry during embryogenesis. This chain is Cilia- and flagella-associated protein 53, found in Danio rerio (Zebrafish).